A 465-amino-acid chain; its full sequence is Siroheme synthase (465 aa).

The precorrin-2 dehydrogenase /sirohydrochlorin ferrochelatase stretch occupies residues 1-203 (MEYLPLFHNL…GRTAEAERLL (203 aa)). NAD(+) is bound by residues 22–23 (EI) and 43–44 (PS). Ser128 is modified (phosphoserine). Residues 216 to 465 (GEVYLVGAGP…WFEGAQAAGR (250 aa)) form a uroporphyrinogen-III C-methyltransferase region. Pro225 lines the S-adenosyl-L-methionine pocket. Catalysis depends on Asp248, which acts as the Proton acceptor. The Proton donor role is filled by Lys270. S-adenosyl-L-methionine contacts are provided by residues 301–303 (GGD), Ile306, 331–332 (TA), Met383, and Gly412.

In the N-terminal section; belongs to the precorrin-2 dehydrogenase / sirohydrochlorin ferrochelatase family. The protein in the C-terminal section; belongs to the precorrin methyltransferase family.

It catalyses the reaction uroporphyrinogen III + 2 S-adenosyl-L-methionine = precorrin-2 + 2 S-adenosyl-L-homocysteine + H(+). The catalysed reaction is precorrin-2 + NAD(+) = sirohydrochlorin + NADH + 2 H(+). It carries out the reaction siroheme + 2 H(+) = sirohydrochlorin + Fe(2+). Its pathway is cofactor biosynthesis; adenosylcobalamin biosynthesis; precorrin-2 from uroporphyrinogen III: step 1/1. It participates in cofactor biosynthesis; adenosylcobalamin biosynthesis; sirohydrochlorin from precorrin-2: step 1/1. It functions in the pathway porphyrin-containing compound metabolism; siroheme biosynthesis; precorrin-2 from uroporphyrinogen III: step 1/1. The protein operates within porphyrin-containing compound metabolism; siroheme biosynthesis; siroheme from sirohydrochlorin: step 1/1. Its pathway is porphyrin-containing compound metabolism; siroheme biosynthesis; sirohydrochlorin from precorrin-2: step 1/1. Functionally, multifunctional enzyme that catalyzes the SAM-dependent methylations of uroporphyrinogen III at position C-2 and C-7 to form precorrin-2 via precorrin-1. Then it catalyzes the NAD-dependent ring dehydrogenation of precorrin-2 to yield sirohydrochlorin. Finally, it catalyzes the ferrochelation of sirohydrochlorin to yield siroheme. This is Siroheme synthase from Stutzerimonas stutzeri (strain A1501) (Pseudomonas stutzeri).